A 392-amino-acid polypeptide reads, in one-letter code: Phosphoglycerate kinase (392 aa).

Residues 21 to 23 (DLN), Arg36, 59 to 62 (HLGR), Arg114, and Arg147 contribute to the substrate site. ATP contacts are provided by residues Lys198, Glu320, and 346-349 (GGDT).

This sequence belongs to the phosphoglycerate kinase family. As to quaternary structure, monomer.

Its subcellular location is the cytoplasm. The enzyme catalyses (2R)-3-phosphoglycerate + ATP = (2R)-3-phospho-glyceroyl phosphate + ADP. Its pathway is carbohydrate degradation; glycolysis; pyruvate from D-glyceraldehyde 3-phosphate: step 2/5. The protein is Phosphoglycerate kinase of Nitrosomonas eutropha (strain DSM 101675 / C91 / Nm57).